A 328-amino-acid chain; its full sequence is Peroxidase 71 (328 aa).

Residues 1 to 23 form the signal peptide; sequence MGLVRSLCLLITFLNCLIISVHG. Intrachain disulfides connect C44–C120, C77–C82, C126–C324, and C204–C235. H75 acts as the Proton acceptor in catalysis. Ca(2+) is bound by residues D76, V79, G81, D83, and S85. A substrate-binding site is contributed by P167. Residue H197 participates in heme b binding. Residue T198 coordinates Ca(2+). A glycan (N-linked (GlcNAc...) asparagine) is linked at N213. Ca(2+) contacts are provided by D248, S251, and D256. N262 carries an N-linked (GlcNAc...) asparagine glycan.

This sequence belongs to the peroxidase family. Classical plant (class III) peroxidase subfamily. It depends on heme b as a cofactor. Ca(2+) serves as cofactor. As to expression, slightly expressed in roots.

The protein resides in the secreted. It catalyses the reaction 2 a phenolic donor + H2O2 = 2 a phenolic radical donor + 2 H2O. Its function is as follows. Removal of H(2)O(2), oxidation of toxic reductants, biosynthesis and degradation of lignin, suberization, auxin catabolism, response to environmental stresses such as wounding, pathogen attack and oxidative stress. These functions might be dependent on each isozyme/isoform in each plant tissue. This Arabidopsis thaliana (Mouse-ear cress) protein is Peroxidase 71 (PER71).